Consider the following 281-residue polypeptide: Phosphate import ATP-binding protein PstB 1 (281 aa).

Residues 1–34 (MTENTAETADESSDGGVTATTGAATTTPTTPPEP) are disordered. The span at 15–28 (GGVTATTGAATTTP) shows a compositional bias: low complexity. Positions 36-276 (IRARDLDVFY…PEHQRVEEYI (241 aa)) constitute an ABC transporter domain. Residue 68-75 (GPSGCGKS) participates in ATP binding.

This sequence belongs to the ABC transporter superfamily. Phosphate importer (TC 3.A.1.7) family. The complex is composed of two ATP-binding proteins (PstB), two transmembrane proteins (PstC and PstA) and a solute-binding protein (PstS).

The protein resides in the cell membrane. The catalysed reaction is phosphate(out) + ATP + H2O = ADP + 2 phosphate(in) + H(+). In terms of biological role, part of the ABC transporter complex PstSACB involved in phosphate import. Responsible for energy coupling to the transport system. This is Phosphate import ATP-binding protein PstB 1 from Halobacterium salinarum (strain ATCC 700922 / JCM 11081 / NRC-1) (Halobacterium halobium).